The sequence spans 316 residues: DDRGK domain-containing protein 1 (316 aa).

Over 1 to 3 (MVE) the chain is Lumenal. The helical transmembrane segment at 4–24 (LDYLFLGSVGFLTIALMLIIL) threads the bilayer. Over 25–316 (RIIKLYFDEK…VEHVSELTAA (292 aa)) the chain is Cytoplasmic. Residues 147–187 (LEQEKEKRLQKEREKQMEQEEEERKRKCREREEREKREEEE) form a disordered region.

This sequence belongs to the DDRGK1 family.

The protein resides in the endoplasmic reticulum membrane. In terms of biological role, substrate adapter for ufmylation, the covalent attachment of the ubiquitin-like modifier UFM1 to substrate proteins. The chain is DDRGK domain-containing protein 1 from Brugia malayi (Filarial nematode worm).